The primary structure comprises 1237 residues: U3 small nucleolar RNA-associated protein 22 (1237 aa).

The disordered stretch occupies residues 1–78; it reads MATSVKRKAS…TNTAATRHNG (78 aa). A phosphoserine mark is found at Ser10 and Ser58. The residue at position 60 (Thr60) is a Phosphothreonine. Residues 61-78 show a composition bias toward polar residues; it reads SPESNEVATNTAATRHNG. At Ser64 the chain carries Phosphoserine.

This sequence belongs to the NRAP family. As to quaternary structure, interacts with snoRNA U3. Interacts with MPP10. Component of the ribosomal small subunit (SSU) processome composed of at least 40 protein subunits and snoRNA U3. Interacts with UBP10.

The protein localises to the nucleus. The protein resides in the nucleolus. Its function is as follows. Involved in nucleolar processing of pre-18S ribosomal RNA and ribosome assembly. The polypeptide is U3 small nucleolar RNA-associated protein 22 (UTP22) (Saccharomyces cerevisiae (strain ATCC 204508 / S288c) (Baker's yeast)).